The following is a 502-amino-acid chain: Mannitol 2-dehydrogenase (502 aa).

37 to 48 provides a ligand contact to NAD(+); the sequence is IVHVGVGGFHRA.

It belongs to the mannitol dehydrogenase family. As to quaternary structure, monomer.

The catalysed reaction is D-mannitol + NAD(+) = D-fructose + NADH + H(+). Catalyzes the NAD(H)-dependent interconversion of D-fructose and D-mannitol in the mannitol metabolic pathway. The sequence is that of Mannitol 2-dehydrogenase from Aspergillus terreus (strain NIH 2624 / FGSC A1156).